The chain runs to 611 residues: Chaperone protein DnaK (611 aa).

Position 173 is a phosphothreonine; by autocatalysis (threonine 173). Residues 579–592 (AAGQAEGAQGAQDA) show a composition bias toward low complexity. The tract at residues 579–611 (AAGQAEGAQGAQDAGAKKDNVVDAEFEEVKEDK) is disordered. Acidic residues predominate over residues 600 to 611 (VDAEFEEVKEDK).

This sequence belongs to the heat shock protein 70 family.

In terms of biological role, acts as a chaperone. This Bacillus mycoides (strain KBAB4) (Bacillus weihenstephanensis) protein is Chaperone protein DnaK.